The following is a 288-amino-acid chain: Light-independent protochlorophyllide reductase iron-sulfur ATP-binding protein (288 aa).

ATP-binding positions include 10–15 (GIGKST) and Lys-39. Ser-14 is a Mg(2+) binding site. [4Fe-4S] cluster contacts are provided by Cys-95 and Cys-129. 180 to 181 (NR) contributes to the ATP binding site.

It belongs to the NifH/BchL/ChlL family. In terms of assembly, homodimer. Protochlorophyllide reductase is composed of three subunits; ChlL, ChlN and ChlB. [4Fe-4S] cluster serves as cofactor.

The enzyme catalyses chlorophyllide a + oxidized 2[4Fe-4S]-[ferredoxin] + 2 ADP + 2 phosphate = protochlorophyllide a + reduced 2[4Fe-4S]-[ferredoxin] + 2 ATP + 2 H2O. It functions in the pathway porphyrin-containing compound metabolism; chlorophyll biosynthesis (light-independent). Functionally, component of the dark-operative protochlorophyllide reductase (DPOR) that uses Mg-ATP and reduced ferredoxin to reduce ring D of protochlorophyllide (Pchlide) to form chlorophyllide a (Chlide). This reaction is light-independent. The L component serves as a unique electron donor to the NB-component of the complex, and binds Mg-ATP. This chain is Light-independent protochlorophyllide reductase iron-sulfur ATP-binding protein, found in Trichodesmium erythraeum (strain IMS101).